The sequence spans 177 residues: MAEFATIARPYAKALFGLAQEKSQIESWLGGLEKLAAVVQEGKVASLIDRPETNASEKADILIDLVGLKDKELKNFVIVLAGQKRLSILPEVYAQYQDLTLSFNHIKSAVIYSAYPLTDKQVGELAQMLNKRFDSELKISVEIEPELIGGIKVEVGDQVLDLSVQGKLSALYTTMTN.

The protein belongs to the ATPase delta chain family. As to quaternary structure, F-type ATPases have 2 components, F(1) - the catalytic core - and F(0) - the membrane proton channel. F(1) has five subunits: alpha(3), beta(3), gamma(1), delta(1), epsilon(1). F(0) has three main subunits: a(1), b(2) and c(10-14). The alpha and beta chains form an alternating ring which encloses part of the gamma chain. F(1) is attached to F(0) by a central stalk formed by the gamma and epsilon chains, while a peripheral stalk is formed by the delta and b chains.

It is found in the cell inner membrane. Its function is as follows. F(1)F(0) ATP synthase produces ATP from ADP in the presence of a proton or sodium gradient. F-type ATPases consist of two structural domains, F(1) containing the extramembraneous catalytic core and F(0) containing the membrane proton channel, linked together by a central stalk and a peripheral stalk. During catalysis, ATP synthesis in the catalytic domain of F(1) is coupled via a rotary mechanism of the central stalk subunits to proton translocation. This protein is part of the stalk that links CF(0) to CF(1). It either transmits conformational changes from CF(0) to CF(1) or is implicated in proton conduction. The polypeptide is ATP synthase subunit delta (Neisseria meningitidis serogroup A / serotype 4A (strain DSM 15465 / Z2491)).